The sequence spans 856 residues: Increased rDNA silencing protein 4 (856 aa).

Disordered regions lie at residues M1 to S204, K230 to E563, and T589 to L672. Composition is skewed to low complexity over residues G12–A42, V67–G84, and S111–T130. Over residues H152–P162 the composition is skewed to basic and acidic residues. The span at A194 to S204 shows a compositional bias: low complexity. The span at K239 to H254 shows a compositional bias: basic residues. 2 stretches are compositionally biased toward polar residues: residues H255–C275 and S303–G315. A compositionally biased stretch (basic and acidic residues) spans G329–G347. 3 stretches are compositionally biased toward polar residues: residues P396–S410, R451–E468, and R478–V488. Positions K503 to R514 are enriched in basic and acidic residues. Positions T517–P535 are enriched in low complexity. Basic residues predominate over residues R603–T620. Residues P644–A654 show a composition bias toward polar residues. The EH domain maps to D743–R832.

It belongs to the IRS4 family.

In terms of biological role, positive regulator of phosphatidylinositol 4,5-bisphosphate turnover and negatively regulates signaling through the cell integrity pathway. Involved in rDNA silencing. This Neurospora crassa (strain ATCC 24698 / 74-OR23-1A / CBS 708.71 / DSM 1257 / FGSC 987) protein is Increased rDNA silencing protein 4 (irs-4).